Consider the following 191-residue polypeptide: Leucyl/phenylalanyl-tRNA--protein transferase (191 aa).

The protein belongs to the L/F-transferase family.

The protein localises to the cytoplasm. It carries out the reaction N-terminal L-lysyl-[protein] + L-leucyl-tRNA(Leu) = N-terminal L-leucyl-L-lysyl-[protein] + tRNA(Leu) + H(+). It catalyses the reaction N-terminal L-arginyl-[protein] + L-leucyl-tRNA(Leu) = N-terminal L-leucyl-L-arginyl-[protein] + tRNA(Leu) + H(+). The catalysed reaction is L-phenylalanyl-tRNA(Phe) + an N-terminal L-alpha-aminoacyl-[protein] = an N-terminal L-phenylalanyl-L-alpha-aminoacyl-[protein] + tRNA(Phe). Functionally, functions in the N-end rule pathway of protein degradation where it conjugates Leu, Phe and, less efficiently, Met from aminoacyl-tRNAs to the N-termini of proteins containing an N-terminal arginine or lysine. The chain is Leucyl/phenylalanyl-tRNA--protein transferase from Rubrobacter xylanophilus (strain DSM 9941 / JCM 11954 / NBRC 16129 / PRD-1).